Consider the following 165-residue polypeptide: Lipoprotein signal peptidase (165 aa).

The next 4 membrane-spanning stretches (helical) occupy residues 11-31, 41-61, 64-84, and 92-112; these read YWVLALAAIVLDQWSKWAVLS, VIPSFFDLTLVYNPGAAFSFL, QGGWQKYFFLVLAVAVSAYLV, and FATLGKTGAAMIIGGALGNVI. Residues aspartate 122 and aspartate 140 contribute to the active site. A helical transmembrane segment spans residues 132-152; sequence FYPAFNIADSFICVGAVLAVL.

This sequence belongs to the peptidase A8 family.

It localises to the cell inner membrane. The catalysed reaction is Release of signal peptides from bacterial membrane prolipoproteins. Hydrolyzes -Xaa-Yaa-Zaa-|-(S,diacylglyceryl)Cys-, in which Xaa is hydrophobic (preferably Leu), and Yaa (Ala or Ser) and Zaa (Gly or Ala) have small, neutral side chains.. It functions in the pathway protein modification; lipoprotein biosynthesis (signal peptide cleavage). Its function is as follows. This protein specifically catalyzes the removal of signal peptides from prolipoproteins. The polypeptide is Lipoprotein signal peptidase (Neisseria meningitidis serogroup A / serotype 4A (strain DSM 15465 / Z2491)).